Reading from the N-terminus, the 1099-residue chain is 1-phosphatidylinositol 4,5-bisphosphate phosphodiesterase 1 (1099 aa).

The segment covering 1–10 has biased composition (basic and acidic residues); the sequence is MLESLNRRNS. Disordered regions lie at residues 1–109 and 128–164; these read MLES…SSTT and ESRS…KSIQ. Low complexity-rich tracts occupy residues 43–66 and 86–109; these read PPKS…KSDL and PKQQ…SSTT. Over residues 131-141 the composition is skewed to polar residues; that stretch reads SIVSNNGGSPM. A compositionally biased stretch (low complexity) spans 142–155; sequence SDSTTVTSTLSTDT. The 161-residue stretch at 566–726 folds into the PI-PLC X-box domain; the sequence is YDYPLNEYFI…LKHKFIIKVK (161 aa). Residues His579 and His642 contribute to the active site. Residues Lys724 and Lys726 each contribute to the substrate site. Residues 742–780 are disordered; sequence FTTSTTTTTTTTTTTTTATSLSEDNENNKSNSSSTSSFI. Residues 743–778 are compositionally biased toward low complexity; that stretch reads TTSTTTTTTTTTTTTTATSLSEDNENNKSNSSSTSS. The PI-PLC Y-box domain maps to 794–912; it reads ELSNLGIYTQ…GYVLKPSVLR (119 aa). Substrate-binding residues include Ser823 and Arg852. Positions 917–1071 constitute a C2 domain; the sequence is KSSSSNVDTR…QGYRYIYLND (155 aa).

The enzyme catalyses a 1,2-diacyl-sn-glycero-3-phospho-(1D-myo-inositol-4,5-bisphosphate) + H2O = 1D-myo-inositol 1,4,5-trisphosphate + a 1,2-diacyl-sn-glycerol + H(+). Functionally, the production of the second messenger molecules diacylglycerol (DAG) and inositol 1,4,5-trisphosphate (IP3) is mediated by activated phosphatidylinositol-specific phospholipase C enzymes. The polypeptide is 1-phosphatidylinositol 4,5-bisphosphate phosphodiesterase 1 (PLC1) (Candida albicans (Yeast)).